The primary structure comprises 100 residues: Putative protein adenylyltransferase MJ1379 (100 aa).

The GSX(10)DXD motif motif lies at 31-45; the sequence is GSYARGEQTEESDID. The Mg(2+) site is built by Asp43, Asp45, and Asp77.

This sequence belongs to the MntA antitoxin family. In terms of assembly, probably forms a complex with cognate toxin MJ1380. Mg(2+) serves as cofactor.

The enzyme catalyses L-tyrosyl-[protein] + ATP = O-(5'-adenylyl)-L-tyrosyl-[protein] + diphosphate. It carries out the reaction O-(5'-adenylyl)-L-tyrosyl-[protein] + ATP = O-[5'-(adenylyl-(5'-&gt;3')-adenylyl)]-L-tyrosyl-[protein] + diphosphate. In terms of biological role, probable antitoxin component of a putative type VII toxin-antitoxin (TA) system. Neutralizes cognate toxic MJ1380 by di-AMPylation. The chain is Putative protein adenylyltransferase MJ1379 from Methanocaldococcus jannaschii (strain ATCC 43067 / DSM 2661 / JAL-1 / JCM 10045 / NBRC 100440) (Methanococcus jannaschii).